The following is a 125-amino-acid chain: Small ribosomal subunit protein uS13 (125 aa).

The protein belongs to the universal ribosomal protein uS13 family. Part of the 30S ribosomal subunit. Forms a loose heterodimer with protein S19. Forms two bridges to the 50S subunit in the 70S ribosome.

In terms of biological role, located at the top of the head of the 30S subunit, it contacts several helices of the 16S rRNA. In the 70S ribosome it contacts the 23S rRNA (bridge B1a) and protein L5 of the 50S subunit (bridge B1b), connecting the 2 subunits; these bridges are implicated in subunit movement. Contacts the tRNAs in the A and P-sites. This is Small ribosomal subunit protein uS13 from Rickettsia felis (strain ATCC VR-1525 / URRWXCal2) (Rickettsia azadi).